The following is a 262-amino-acid chain: Tropinone reductase homolog At2g29310 (262 aa).

13–37 contacts NADP(+); that stretch reads LVTGAASGIGYAIVEELASFGAIIH. S146 lines the substrate pocket. The Proton acceptor role is filled by Y159.

It belongs to the short-chain dehydrogenases/reductases (SDR) family. SDR65C subfamily.

This Arabidopsis thaliana (Mouse-ear cress) protein is Tropinone reductase homolog At2g29310.